The primary structure comprises 133 residues: Ribosome-binding factor A (133 aa).

This sequence belongs to the RbfA family. As to quaternary structure, monomer. Binds 30S ribosomal subunits, but not 50S ribosomal subunits or 70S ribosomes.

The protein localises to the cytoplasm. One of several proteins that assist in the late maturation steps of the functional core of the 30S ribosomal subunit. Associates with free 30S ribosomal subunits (but not with 30S subunits that are part of 70S ribosomes or polysomes). Required for efficient processing of 16S rRNA. May interact with the 5'-terminal helix region of 16S rRNA. This chain is Ribosome-binding factor A, found in Shigella boydii serotype 18 (strain CDC 3083-94 / BS512).